Consider the following 221-residue polypeptide: SIN3-HDAC complex-associated factor (221 aa).

Residues 112 to 121 (QKEFKRHNSD) are compositionally biased toward basic and acidic residues. Disordered regions lie at residues 112–152 (QKEF…MASG) and 201–221 (AAAE…TQEW). Low complexity predominate over residues 124–135 (STTSSASPAQSP). Polar residues predominate over residues 136 to 152 (CYSNQSDDGSDTEMASG).

It belongs to the SINHCAF family. As to quaternary structure, interacts with the Sin3/HDAC corepressor complex at least composed of BRMS1, BRMS1L, ING2, SAP30, SAP30L and HDAC1. Found in a complex composed of at least SINHCAF, SIN3A, HDAC1, SAP30, RBBP4, OGT and TET1. Interacts with SIN3A and OGT.

The protein localises to the nucleus. Its function is as follows. Subunit of the Sin3 deacetylase complex (Sin3/HDAC), this subunit is important for the repression of genes encoding components of the TGF-beta signaling pathway. Core component of a SIN3A complex (composed of at least SINHCAF, SIN3A, HDAC1, SAP30, RBBP4, OGT and TET1) present in embryonic stem (ES) cells. Promotes the stability of SIN3A and its presence on chromatin and is essential for maintaining the potential of ES cells to proliferate rapidly, while ensuring a short G1-phase of the cell cycle, thereby preventing premature lineage priming. This chain is SIN3-HDAC complex-associated factor, found in Homo sapiens (Human).